Consider the following 446-residue polypeptide: Histidine--tRNA ligase (446 aa).

Belongs to the class-II aminoacyl-tRNA synthetase family. As to quaternary structure, homodimer.

Its subcellular location is the cytoplasm. It catalyses the reaction tRNA(His) + L-histidine + ATP = L-histidyl-tRNA(His) + AMP + diphosphate + H(+). In Paraburkholderia xenovorans (strain LB400), this protein is Histidine--tRNA ligase.